Reading from the N-terminus, the 376-residue chain is MAKQDYYEILGVSKTAEEREIKKAYKRLAMKYHPDRNQGDKEAEAKFKEIKEAYEVLTDSQKRAAYDQYGHAAFEQGGMGGGGFGGGADFSDIFGDVFGDIFGGGRGRQRAARGADLRYNMELTLEEAVRGVTKEIRIPTLEECDVCHGSGAKPGTQPQTCPTCHGSGQVQMRQGFFAVQQTCPHCQGRGTLIKDPCNKCHGHGRVERSKTLSVKIPAGVDTGDRIRLAGEGEAGEHGAPAGDLYVQVQVKQHPIFEREGNNLYCEVPINFAMAALGGEIEVPTLDGRVKLKVPGETQTGKLFRMRGKGVKSVRGGAQGDLLCRVVVETPVGLNEKQKQLLQELQESFGGPTGEHNSPRSKSFFDGVKKFFDDLTR.

Positions 5-70 (DYYEILGVSK…QKRAAYDQYG (66 aa)) constitute a J domain. A CR-type zinc finger spans residues 131 to 209 (GVTKEIRIPT…CHGHGRVERS (79 aa)). Residues Cys-144, Cys-147, Cys-161, Cys-164, Cys-183, Cys-186, Cys-197, and Cys-200 each contribute to the Zn(2+) site. CXXCXGXG motif repeat units lie at residues 144 to 151 (CDVCHGSG), 161 to 168 (CPTCHGSG), 183 to 190 (CPHCQGRG), and 197 to 204 (CNKCHGHG).

This sequence belongs to the DnaJ family. In terms of assembly, homodimer. Zn(2+) is required as a cofactor.

The protein localises to the cytoplasm. Its function is as follows. Participates actively in the response to hyperosmotic and heat shock by preventing the aggregation of stress-denatured proteins and by disaggregating proteins, also in an autonomous, DnaK-independent fashion. Unfolded proteins bind initially to DnaJ; upon interaction with the DnaJ-bound protein, DnaK hydrolyzes its bound ATP, resulting in the formation of a stable complex. GrpE releases ADP from DnaK; ATP binding to DnaK triggers the release of the substrate protein, thus completing the reaction cycle. Several rounds of ATP-dependent interactions between DnaJ, DnaK and GrpE are required for fully efficient folding. Also involved, together with DnaK and GrpE, in the DNA replication of plasmids through activation of initiation proteins. The sequence is that of Chaperone protein DnaJ from Escherichia fergusonii (strain ATCC 35469 / DSM 13698 / CCUG 18766 / IAM 14443 / JCM 21226 / LMG 7866 / NBRC 102419 / NCTC 12128 / CDC 0568-73).